Reading from the N-terminus, the 463-residue chain is Chromosomal replication initiator protein DnaA (463 aa).

Positions 1–84 (MNTNQIILTN…QLFQHYNNAI (84 aa)) are domain I, interacts with DnaA modulators. The interval 84-124 (IKTVEIITKELPASNQATLELPTKTFADIGSSELNSENIFS) is domain II. The segment at 125-343 (TFDIRFTFDN…GALNKVIAHS (219 aa)) is domain III, AAA+ region. ATP is bound by residues Gly-171, Gly-173, Lys-174, and Thr-175. The domain IV, binds dsDNA stretch occupies residues 344–463 (NFTAKEITLE…INLMMKILQN (120 aa)).

Belongs to the DnaA family. As to quaternary structure, oligomerizes as a right-handed, spiral filament on DNA at oriC.

The protein localises to the cytoplasm. Plays an essential role in the initiation and regulation of chromosomal replication. ATP-DnaA binds to the origin of replication (oriC) to initiate formation of the DNA replication initiation complex once per cell cycle. Binds the DnaA box (a 9 base pair repeat at the origin) and separates the double-stranded (ds)DNA. Forms a right-handed helical filament on oriC DNA; dsDNA binds to the exterior of the filament while single-stranded (ss)DNA is stabiized in the filament's interior. The ATP-DnaA-oriC complex binds and stabilizes one strand of the AT-rich DNA unwinding element (DUE), permitting loading of DNA polymerase. After initiation quickly degrades to an ADP-DnaA complex that is not apt for DNA replication. Binds acidic phospholipids. The polypeptide is Chromosomal replication initiator protein DnaA (Rickettsia bellii (strain OSU 85-389)).